Consider the following 455-residue polypeptide: Chromosomal replication initiator protein DnaA (455 aa).

The segment at 1-75 (MDTNNNIEKE…EILSQNKVGM (75 aa)) is domain I, interacts with DnaA modulators. Residues 75–106 (MHLAHSVDVRIEVAPKIQISTQSNINYKATKM) are domain II. The segment at 107–321 (SVKDSYTFEN…GAIIKISVNA (215 aa)) is domain III, AAA+ region. 4 residues coordinate ATP: G151, G153, K154, and T155. The domain IV, binds dsDNA stretch occupies residues 322-455 (NLMNASIDLN…DKKTAFNSSE (134 aa)).

Belongs to the DnaA family. In terms of assembly, oligomerizes as a right-handed, spiral filament on DNA at oriC.

The protein localises to the cytoplasm. Functionally, plays an essential role in the initiation and regulation of chromosomal replication. ATP-DnaA binds to the origin of replication (oriC) to initiate formation of the DNA replication initiation complex once per cell cycle. Binds the DnaA box (a 9 base pair repeat at the origin) and separates the double-stranded (ds)DNA. Forms a right-handed helical filament on oriC DNA; dsDNA binds to the exterior of the filament while single-stranded (ss)DNA is stabiized in the filament's interior. The ATP-DnaA-oriC complex binds and stabilizes one strand of the AT-rich DNA unwinding element (DUE), permitting loading of DNA polymerase. After initiation quickly degrades to an ADP-DnaA complex that is not apt for DNA replication. Binds acidic phospholipids. This chain is Chromosomal replication initiator protein DnaA, found in Helicobacter pylori (strain HPAG1).